The primary structure comprises 265 residues: Cyclin-C (265 aa).

The region spanning 48 to 151 (IQVLGEQLKL…LLENLDCCLI (104 aa)) is the Cyclin N-terminal domain.

It belongs to the cyclin family. Cyclin C subfamily. As to quaternary structure, component of the Cdk8 module of the Mediator complex.

The protein localises to the nucleus. Component of the Mediator complex, a coactivator involved in regulated gene transcription of nearly all RNA polymerase II-dependent genes. Mediator functions as a bridge to convey information from gene-specific regulatory proteins to the basal RNA polymerase II transcription machinery. Mediator is recruited to promoters by direct interactions with regulatory proteins and serves as a scaffold for the assembly of a functional preinitiation complex with RNA polymerase II and the general transcription factors. Binds to and activates cyclin-dependent kinase Cdk8 that phosphorylates the CTD (C-terminal domain) of the large subunit of RNA polymerase II (RNAp II), which may inhibit the formation of a transcription initiation complex. The sequence is that of Cyclin-C (CycC) from Aedes aegypti (Yellowfever mosquito).